The primary structure comprises 341 residues: L-threonine 3-dehydrogenase (341 aa).

Zn(2+) is bound at residue Cys-38. Active-site charge relay system residues include Thr-40 and His-43. Positions 63, 64, 93, 96, 99, and 107 each coordinate Zn(2+). Residues Ile-175, Asp-195, Arg-200, 262–264, and 286–287 each bind NAD(+); these read LGI and IY.

This sequence belongs to the zinc-containing alcohol dehydrogenase family. Homotetramer. It depends on Zn(2+) as a cofactor.

Its subcellular location is the cytoplasm. It carries out the reaction L-threonine + NAD(+) = (2S)-2-amino-3-oxobutanoate + NADH + H(+). It participates in amino-acid degradation; L-threonine degradation via oxydo-reductase pathway; glycine from L-threonine: step 1/2. Functionally, catalyzes the NAD(+)-dependent oxidation of L-threonine to 2-amino-3-ketobutyrate. In Solibacter usitatus (strain Ellin6076), this protein is L-threonine 3-dehydrogenase.